Consider the following 261-residue polypeptide: Methyltransferase nsrG (261 aa).

Residues 49–141 are methyltransferase domain; that stretch reads DVGAGNGPYA…AHQLRPGALF (93 aa).

It belongs to the methyltransferase superfamily.

The protein operates within secondary metabolite biosynthesis. Its function is as follows. Methyltransferase; part of the gene cluster that mediates the biosynthesis of the tetrahydroxanthone dimer neosartorin, which exhibits antibacterial activity. The two different monomeric units appear to be synthesized by the same set of enzymes, among which the Baeyer-Villiger monooxygenase nsrF is the key enzyme for the divergence of the biosynthetic routes. The pathway begins with the synthesis of atrochrysone thioester by the polyketide synthase nsrB. The atrochrysone carboxyl ACP thioesterase nsrC then breaks the thioester bond and releases the atrochrysone carboxylic acid from AacuL. Atrochrysone carboxylic acid is decarboxylated by the decarboxylase nsrE, and oxidized by the anthrone oxygenase nsrD to yield emodin. Emodin is then reduced to emodin hydroquinone by the oxidoreductase nsrR. A-ring reduction by the short chain dehydrogenase nsrJ, dehydration by the scytalone dehydratase-like protein nsrI and probable spontaneous re-oxidation, results in overall deoxygenation to chrysophanol. The Baeyer-Villiger monooxygenase nsrF accepts chrysophanol as a substrate to insert one oxygen atom at two different positions to yield the precursors of both monomric units. NsrF is promiscuous/flexible in interacting with the 2 (non methylated and methylated) aromatic rings of chrysophanol, thus diverging the biosynthetic pathway at this point. After the hydrolysis of the lactones, methylesterification by the methyltransferase nsrG yields respectively moniliphenone and 2,2',6'-trihydroxy-4-methyl-6-methoxya-cyldiphenylmethanone. The next steps are the hydroxylation by the FAD-dependent monooxygenase nsrK, followed by isomerization by the monooxygenase nsrQ. The short chain dehydrogenase/reductase nsrO then catalyzes the C-5 ketoreduction to give the xanthone skeleton of blennolide C and 5-acetylblennolide A. The acetyltransferase nsrL has a strict substrate specificity and uses only blennolide A but not blennolide C to yield 5-acetylblennolide A as the single-acetylated product. In the final step of the biosynthesis, the heterodimerization of the 2 xanthones, blennolide C and 5-acetylblennolide A, is catalyzed by the cytochrome P450 monooxygenase nsrP. NsrP can utilize at least three different xanthones as its substrates to perform the dimerization reaction. The chain is Methyltransferase nsrG from Aspergillus novofumigatus (strain IBT 16806).